The primary structure comprises 420 residues: Sodium/proton antiporter 2 (420 aa).

A run of 11 helical transmembrane segments spans residues 25-45 (IALL…SVEI), 60-80 (IVFY…HQGF), 94-114 (ILLW…DNLT), 136-156 (LGAV…IGDV), 173-193 (IKNL…LMSL), 221-241 (LVFG…SLTG), 242-262 (LPPY…TDVI), 285-305 (GALF…AGIL), 321-341 (LIAS…LVAA), 363-383 (FCAG…VIFM), and 400-420 (FAFA…NFPL).

The protein belongs to the NhaD Na(+)/H(+) (TC 2.A.62) antiporter family.

The protein localises to the membrane. Na(+)/H(+) antiporter that extrudes sodium in exchange for external protons. The sequence is that of Sodium/proton antiporter 2 from Arabidopsis thaliana (Mouse-ear cress).